Here is a 135-residue protein sequence, read N- to C-terminus: ATP synthase epsilon chain (135 aa).

It belongs to the ATPase epsilon chain family. F-type ATPases have 2 components, CF(1) - the catalytic core - and CF(0) - the membrane proton channel. CF(1) has five subunits: alpha(3), beta(3), gamma(1), delta(1), epsilon(1). CF(0) has three main subunits: a, b and c.

It localises to the cell inner membrane. Produces ATP from ADP in the presence of a proton gradient across the membrane. The chain is ATP synthase epsilon chain from Granulibacter bethesdensis (strain ATCC BAA-1260 / CGDNIH1).